The primary structure comprises 107 residues: UPF0060 membrane protein Sala_0701 (107 aa).

Transmembrane regions (helical) follow at residues 4–24 (FAYI…WAWL), 30–50 (VWWV…LTLV), 60–80 (AAYG…VEGA), and 87–107 (LIGA…PRGG).

It belongs to the UPF0060 family.

Its subcellular location is the cell inner membrane. The polypeptide is UPF0060 membrane protein Sala_0701 (Sphingopyxis alaskensis (strain DSM 13593 / LMG 18877 / RB2256) (Sphingomonas alaskensis)).